A 353-amino-acid polypeptide reads, in one-letter code: Photosystem II D2 protein (353 aa).

An N-acetylthreonine modification is found at Thr-2. Position 2 is a phosphothreonine (Thr-2). A helical membrane pass occupies residues 41–61 (CAYFALGGWFTGTTFVTSWYT). Residue His-118 coordinates chlorophyll a. The chain crosses the membrane as a helical span at residues 125–141 (GFMLRQFELARSVQLRP). Residues Gln-130 and Asn-143 each coordinate pheophytin a. The chain crosses the membrane as a helical span at residues 153–166 (VFVSVFLIYPLGQS). Residue His-198 participates in chlorophyll a binding. Residues 208 to 228 (AALLCAIHGATVENTLFEDGD) traverse the membrane as a helical segment. Positions 215 and 262 each coordinate a plastoquinone. His-215 provides a ligand contact to Fe cation. Fe cation is bound at residue His-269. A helical transmembrane segment spans residues 279-295 (GLWMSALGVVGLALNLR).

It belongs to the reaction center PufL/M/PsbA/D family. In terms of assembly, PSII is composed of 1 copy each of membrane proteins PsbA, PsbB, PsbC, PsbD, PsbE, PsbF, PsbH, PsbI, PsbJ, PsbK, PsbL, PsbM, PsbT, PsbX, PsbY, PsbZ, Psb30/Ycf12, at least 3 peripheral proteins of the oxygen-evolving complex and a large number of cofactors. It forms dimeric complexes. It depends on The D1/D2 heterodimer binds P680, chlorophylls that are the primary electron donor of PSII, and subsequent electron acceptors. It shares a non-heme iron and each subunit binds pheophytin, quinone, additional chlorophylls, carotenoids and lipids. There is also a Cl(-1) ion associated with D1 and D2, which is required for oxygen evolution. The PSII complex binds additional chlorophylls, carotenoids and specific lipids. as a cofactor.

The protein resides in the plastid. Its subcellular location is the chloroplast thylakoid membrane. It carries out the reaction 2 a plastoquinone + 4 hnu + 2 H2O = 2 a plastoquinol + O2. Its function is as follows. Photosystem II (PSII) is a light-driven water:plastoquinone oxidoreductase that uses light energy to abstract electrons from H(2)O, generating O(2) and a proton gradient subsequently used for ATP formation. It consists of a core antenna complex that captures photons, and an electron transfer chain that converts photonic excitation into a charge separation. The D1/D2 (PsbA/PsbD) reaction center heterodimer binds P680, the primary electron donor of PSII as well as several subsequent electron acceptors. D2 is needed for assembly of a stable PSII complex. This Ranunculus macranthus (Large buttercup) protein is Photosystem II D2 protein.